Reading from the N-terminus, the 444-residue chain is DNA primase DnaG (444 aa).

A Toprim domain is found at 186–260 (DSIIVVEGRN…EVDFVARAPP (75 aa)). Mg(2+) is bound by residues E192, D234, and D236.

Belongs to the archaeal DnaG primase family. In terms of assembly, forms a ternary complex with MCM helicase and DNA. Component of the archaeal exosome complex. The cofactor is Mg(2+).

It carries out the reaction ssDNA + n NTP = ssDNA/pppN(pN)n-1 hybrid + (n-1) diphosphate.. Its function is as follows. RNA polymerase that catalyzes the synthesis of short RNA molecules used as primers for DNA polymerase during DNA replication. Also part of the exosome, which is a complex involved in RNA degradation. Acts as a poly(A)-binding protein that enhances the interaction between heteromeric, adenine-rich transcripts and the exosome. This Thermoplasma volcanium (strain ATCC 51530 / DSM 4299 / JCM 9571 / NBRC 15438 / GSS1) protein is DNA primase DnaG.